A 124-amino-acid chain; its full sequence is Prefoldin subunit beta (124 aa).

The protein belongs to the prefoldin subunit beta family. As to quaternary structure, heterohexamer of two alpha and four beta subunits.

It is found in the cytoplasm. In terms of biological role, molecular chaperone capable of stabilizing a range of proteins. Seems to fulfill an ATP-independent, HSP70-like function in archaeal de novo protein folding. The protein is Prefoldin subunit beta (pfdB) of Thermoplasma volcanium (strain ATCC 51530 / DSM 4299 / JCM 9571 / NBRC 15438 / GSS1).